A 302-amino-acid chain; its full sequence is Sushi domain-containing protein 6 (302 aa).

The signal sequence occupies residues M1–A39. In terms of domain architecture, Sushi spans S40 to L104. 2 cysteine pairs are disulfide-bonded: C42/C89 and C74/C102. A helical transmembrane segment spans residues I120–L140. Disordered stretches follow at residues G202 to W241 and T256 to A302. Composition is skewed to polar residues over residues R212 to C222, T256 to R267, and S279 to E290.

Its subcellular location is the membrane. May play a role in growth-suppressive activity and cell death. May be involved in the production of chemokine molecules in umbilical vein endothelial cells (HUVECs) cultured in THP1 monocyte LPS-induced medium. Plays a role in preventing tumor onset. This Mus musculus (Mouse) protein is Sushi domain-containing protein 6.